Consider the following 72-residue polypeptide: Dermaseptin-A4 (72 aa).

A signal peptide spans 1 to 22; sequence MAFLKKSLFLVLFLGMVSLSIC. The propeptide occupies 23–41; sequence EEEKREEENEQEDDEQSEE. Positions 24–43 are disordered; that stretch reads EEKREEENEQEDDEQSEEKR. Over residues 30–39 the composition is skewed to acidic residues; that stretch reads ENEQEDDEQS. Ala-69 is modified (alanine amide). Residues 71–72 constitute a propeptide that is removed on maturation; that stretch reads EQ.

It belongs to the frog skin active peptide (FSAP) family. Dermaseptin subfamily. Expressed by the skin glands.

It is found in the secreted. In terms of biological role, possesses a potent antimicrobial activity against Gram-positive and Gram-negative bacteria. Probably acts by disturbing membrane functions with its amphipathic structure. The sequence is that of Dermaseptin-A4 from Agalychnis annae (Blue-sided leaf frog).